The primary structure comprises 545 residues: 2-oxo-Delta(3)-4,5,5-trimethylcyclopentenylacetyl-CoA monooxygenase (545 aa).

FAD is bound by residues Thr-20, Glu-39, 47–50 (TWYW), 59–60 (DT), Tyr-65, and Val-112. 57-59 (RLD) lines the NADP(+) pocket. NADP(+) is bound by residues 193–199 (TGATGVQ) and 216–217 (RT). Position 446 (Val-446) interacts with FAD. NADP(+) is bound at residue Trp-501.

This sequence belongs to the FAD-binding monooxygenase family. In terms of assembly, homodimer. Requires FAD as cofactor.

It catalyses the reaction [(1R)-2,2,3-trimethyl-5-oxocyclopent-3-enyl]acetyl-CoA + NADPH + O2 + H(+) = [(2R)-3,3,4-trimethyl-6-oxo-3,6-dihydro-1H-pyran-2-yl]acetyl-CoA + NADP(+) + H2O. It participates in terpene metabolism; (R)-camphor degradation. In terms of biological role, involved in the degradation of (+)-camphor. Catalyzes the lactonization of 2-oxo-delta(3)-4,5, 5-trimethylcyclopentenylacetyl-CoA (OT-CoA), a key intermediate in the metabolism of camphor. 2-Oxocyclopentyl ethyl acetate is also a good substrate, as is 2-oxocyclohexyl ethyl acetate and methyl-substituted cyclohexanones, but free acid is a poor substrate. The polypeptide is 2-oxo-Delta(3)-4,5,5-trimethylcyclopentenylacetyl-CoA monooxygenase (otemo) (Pseudomonas putida (Arthrobacter siderocapsulatus)).